Here is a 293-residue protein sequence, read N- to C-terminus: UPF0282 protein MK0213 (293 aa).

The protein belongs to the UPF0282 family.

The protein is UPF0282 protein MK0213 of Methanopyrus kandleri (strain AV19 / DSM 6324 / JCM 9639 / NBRC 100938).